The primary structure comprises 471 residues: Ribosomal protein uS12 methylthiotransferase RimO (471 aa).

In terms of domain architecture, MTTase N-terminal spans 19 to 134 (PRVGFVSLGC…VMNAVHTHLP (116 aa)). Cys28, Cys64, Cys93, Cys169, Cys173, and Cys176 together coordinate [4Fe-4S] cluster. Positions 155-396 (LTPRHYAYLK…MAVAEEVSTA (242 aa)) constitute a Radical SAM core domain. The TRAM domain occupies 399 to 471 (QKRVGQTMQV…QGHDLVGQPV (73 aa)).

It belongs to the methylthiotransferase family. RimO subfamily. [4Fe-4S] cluster is required as a cofactor.

The protein resides in the cytoplasm. It carries out the reaction L-aspartate(89)-[ribosomal protein uS12]-hydrogen + (sulfur carrier)-SH + AH2 + 2 S-adenosyl-L-methionine = 3-methylsulfanyl-L-aspartate(89)-[ribosomal protein uS12]-hydrogen + (sulfur carrier)-H + 5'-deoxyadenosine + L-methionine + A + S-adenosyl-L-homocysteine + 2 H(+). Catalyzes the methylthiolation of an aspartic acid residue of ribosomal protein uS12. The polypeptide is Ribosomal protein uS12 methylthiotransferase RimO (Delftia acidovorans (strain DSM 14801 / SPH-1)).